We begin with the raw amino-acid sequence, 299 residues long: GTPase Era (299 aa).

Positions 4-171 (KSGFVAILGR…VDILSENLDE (168 aa)) constitute an Era-type G domain. The G1 stretch occupies residues 12-19 (GRPNVGKS). 12 to 19 (GRPNVGKS) contributes to the GTP binding site. The G2 stretch occupies residues 38–42 (QTTRN). The G3 stretch occupies residues 59–62 (DTPG). GTP contacts are provided by residues 59–63 (DTPGI) and 121–124 (NKID). A G4 region spans residues 121–124 (NKID). A G5 region spans residues 150–152 (ISA). A KH type-2 domain is found at 202–280 (TREEIPHSVA…FLETWVKVKK (79 aa)).

Belongs to the TRAFAC class TrmE-Era-EngA-EngB-Septin-like GTPase superfamily. Era GTPase family. Monomer.

It localises to the cytoplasm. The protein localises to the cell membrane. Its function is as follows. An essential GTPase that binds both GDP and GTP, with rapid nucleotide exchange. Plays a role in 16S rRNA processing and 30S ribosomal subunit biogenesis and possibly also in cell cycle regulation and energy metabolism. In Streptococcus pneumoniae (strain Hungary19A-6), this protein is GTPase Era.